We begin with the raw amino-acid sequence, 549 residues long: Membrane protein insertase YidC (549 aa).

Residues 6–26 (NLLLIGLLLVSFMLWQSWMVD) traverse the membrane as a helical segment. The disordered stretch occupies residues 35–55 (ATAESSVPASSGGDVPNQNDA). A run of 4 helical transmembrane segments spans residues 349-369 (QFLH…TMIV), 424-444 (LGGC…YWTL), 462-482 (LSVK…MWYI), and 503-523 (PIVF…YWVV).

Belongs to the OXA1/ALB3/YidC family. Type 1 subfamily. As to quaternary structure, interacts with the Sec translocase complex via SecD. Specifically interacts with transmembrane segments of nascent integral membrane proteins during membrane integration.

Its subcellular location is the cell inner membrane. Required for the insertion and/or proper folding and/or complex formation of integral membrane proteins into the membrane. Involved in integration of membrane proteins that insert both dependently and independently of the Sec translocase complex, as well as at least some lipoproteins. Aids folding of multispanning membrane proteins. In Tolumonas auensis (strain DSM 9187 / NBRC 110442 / TA 4), this protein is Membrane protein insertase YidC.